The chain runs to 109 residues: Thiosulfate sulfurtransferase GlpE (109 aa).

The Rhodanese domain maps to 16–104 (REQGAVVVDI…WRTTYPAEIS (89 aa)). The Cysteine persulfide intermediate role is filled by Cys-64.

The protein belongs to the GlpE family.

The protein localises to the cytoplasm. It carries out the reaction thiosulfate + hydrogen cyanide = thiocyanate + sulfite + 2 H(+). It catalyses the reaction thiosulfate + [thioredoxin]-dithiol = [thioredoxin]-disulfide + hydrogen sulfide + sulfite + 2 H(+). Functionally, transferase that catalyzes the transfer of sulfur from thiosulfate to thiophilic acceptors such as cyanide or dithiols. May function in a CysM-independent thiosulfate assimilation pathway by catalyzing the conversion of thiosulfate to sulfite, which can then be used for L-cysteine biosynthesis. This chain is Thiosulfate sulfurtransferase GlpE, found in Pseudomonas fluorescens (strain SBW25).